Here is a 257-residue protein sequence, read N- to C-terminus: NAD-dependent protein deacetylase (257 aa).

The region spanning 3-252 is the Deacetylase sirtuin-type domain; that stretch reads NGECLEGGRK…DLVLNEVKGI (250 aa). 8 residues coordinate NAD(+): Ala-29, Thr-33, Phe-40, Arg-41, Gln-105, Ile-107, Asp-108, and His-123. Phe-40 provides a ligand contact to nicotinamide. 2 residues coordinate nicotinamide: Ile-107 and Asp-108. His-123 serves as the catalytic Proton acceptor. Zn(2+)-binding residues include Cys-131, Cys-134, Cys-156, and Cys-159. 3 residues coordinate NAD(+): Ser-195, Ser-196, and Asn-220.

The protein belongs to the sirtuin family. Class U subfamily. Zn(2+) serves as cofactor.

The protein localises to the cytoplasm. It carries out the reaction N(6)-acetyl-L-lysyl-[protein] + NAD(+) + H2O = 2''-O-acetyl-ADP-D-ribose + nicotinamide + L-lysyl-[protein]. NAD-dependent protein deacetylase which modulates the activities of several enzymes which are inactive in their acetylated form. Deacetylates the N-terminal lysine residue of Alba, the major archaeal chromatin protein and that, in turn, increases Alba's DNA binding affinity, thereby repressing transcription. In Caldivirga maquilingensis (strain ATCC 700844 / DSM 13496 / JCM 10307 / IC-167), this protein is NAD-dependent protein deacetylase.